The sequence spans 89 residues: Glutamyl-tRNA(Gln) amidotransferase subunit C (89 aa).

This sequence belongs to the GatC family. In terms of assembly, heterotrimer of A, B and C subunits.

The enzyme catalyses L-glutamyl-tRNA(Gln) + L-glutamine + ATP + H2O = L-glutaminyl-tRNA(Gln) + L-glutamate + ADP + phosphate + H(+). The catalysed reaction is L-aspartyl-tRNA(Asn) + L-glutamine + ATP + H2O = L-asparaginyl-tRNA(Asn) + L-glutamate + ADP + phosphate + 2 H(+). Allows the formation of correctly charged Asn-tRNA(Asn) or Gln-tRNA(Gln) through the transamidation of misacylated Asp-tRNA(Asn) or Glu-tRNA(Gln) in organisms which lack either or both of asparaginyl-tRNA or glutaminyl-tRNA synthetases. The reaction takes place in the presence of glutamine and ATP through an activated phospho-Asp-tRNA(Asn) or phospho-Glu-tRNA(Gln). This chain is Glutamyl-tRNA(Gln) amidotransferase subunit C, found in Thermus thermophilus (strain ATCC 27634 / DSM 579 / HB8).